The following is a 498-amino-acid chain: MRINPTTSGPGVSTLEERNLGRITQIIGPVLDVAFPPGKMPNIYNSLVVKGRDTVGQQINVTCEVQQLLGNNRIRAVAMSATDGLMRGMEVIDTGAPLSVPVGGSTLGRIFNVLGEPVDNLGPVDTCTTSPIHRSAPAFIQLDTKFSIFETGIKVVDLLAPYRRGGKIGLFGGAGVGKTVLIMELINNIAKAHGGVSVSGGVGERTREGNDLYMEMKESGVINEQNIAESKVALVYGQMNEPPGARMRVGLTALTMAEYFRDVNEQDVLLFIDNISRFVQAGSEVSALLGRMPSAVGYQPTLSTEMGSLQERITSTKEGSITSIQAVYVPADDLTDPAPATTFAHLDATTVLSRGLAAKGIYPAVDPLGSTSTMLQPRIVGEKHYETAQRVKQTSQRYKELQDIIAILGLDELSEEDRLTVARARKIERFLSQPFFVAEVFTGSPGKYVGLAETIRGFQLILSGELDGLPEQAFYLVGNIDEATAKAMNLEVESKLKK.

172-179 (GGAGVGKT) is an ATP binding site.

This sequence belongs to the ATPase alpha/beta chains family. In terms of assembly, F-type ATPases have 2 components, CF(1) - the catalytic core - and CF(0) - the membrane proton channel. CF(1) has five subunits: alpha(3), beta(3), gamma(1), delta(1), epsilon(1). CF(0) has four main subunits: a(1), b(1), b'(1) and c(9-12).

The protein localises to the plastid. The protein resides in the chloroplast thylakoid membrane. It catalyses the reaction ATP + H2O + 4 H(+)(in) = ADP + phosphate + 5 H(+)(out). Produces ATP from ADP in the presence of a proton gradient across the membrane. The catalytic sites are hosted primarily by the beta subunits. In Illicium oligandrum (Star anise), this protein is ATP synthase subunit beta, chloroplastic.